The sequence spans 414 residues: Glutamyl-tRNA reductase (414 aa).

Substrate contacts are provided by residues Thr-51–Arg-54, Ser-107, Glu-112–Glu-114, and Gln-118. Catalysis depends on Cys-52, which acts as the Nucleophile. Gly-187–Gly-192 is a binding site for NADP(+).

This sequence belongs to the glutamyl-tRNA reductase family. In terms of assembly, homodimer.

It carries out the reaction (S)-4-amino-5-oxopentanoate + tRNA(Glu) + NADP(+) = L-glutamyl-tRNA(Glu) + NADPH + H(+). The protein operates within porphyrin-containing compound metabolism; protoporphyrin-IX biosynthesis; 5-aminolevulinate from L-glutamyl-tRNA(Glu): step 1/2. Catalyzes the NADPH-dependent reduction of glutamyl-tRNA(Glu) to glutamate 1-semialdehyde (GSA). In Sulfolobus acidocaldarius (strain ATCC 33909 / DSM 639 / JCM 8929 / NBRC 15157 / NCIMB 11770), this protein is Glutamyl-tRNA reductase.